A 128-amino-acid chain; its full sequence is Dehydrin Xero 1 (128 aa).

A compositionally biased stretch (polar residues) spans 1–19 (MESYQNQSGAQQTHQQLDQ). The tract at residues 1 to 128 (MESYQNQSGA…IKEKLPGGHH (128 aa)) is disordered. Low complexity-rich tracts occupy residues 23-41 (PFPATTGAYGTAGGAPAVA) and 48-60 (GMLHRSGSSSSSS). Basic and acidic residues predominate over residues 75–91 (GITEKIKEKLPGHHDSN). Positions 92 to 104 (KTSSLGSTTTAYD) are enriched in polar residues. Positions 107-128 (TVHHEKKGMMEKIKEKLPGGHH) are enriched in basic and acidic residues.

The protein belongs to the plant dehydrin family.

This Arabidopsis thaliana (Mouse-ear cress) protein is Dehydrin Xero 1 (XERO1).